The following is a 251-amino-acid chain: 1-(5-phosphoribosyl)-5-[(5-phosphoribosylamino)methylideneamino] imidazole-4-carboxamide isomerase (251 aa).

Residue aspartate 8 is the Proton acceptor of the active site. The active-site Proton donor is aspartate 131.

The protein belongs to the HisA/HisF family.

It is found in the cytoplasm. The catalysed reaction is 1-(5-phospho-beta-D-ribosyl)-5-[(5-phospho-beta-D-ribosylamino)methylideneamino]imidazole-4-carboxamide = 5-[(5-phospho-1-deoxy-D-ribulos-1-ylimino)methylamino]-1-(5-phospho-beta-D-ribosyl)imidazole-4-carboxamide. It functions in the pathway amino-acid biosynthesis; L-histidine biosynthesis; L-histidine from 5-phospho-alpha-D-ribose 1-diphosphate: step 4/9. This Burkholderia cenocepacia (strain HI2424) protein is 1-(5-phosphoribosyl)-5-[(5-phosphoribosylamino)methylideneamino] imidazole-4-carboxamide isomerase.